Here is a 523-residue protein sequence, read N- to C-terminus: 2-isopropylmalate synthase (523 aa).

The 263-residue stretch at 5 to 267 folds into the Pyruvate carboxyltransferase domain; that stretch reads VIIFDTTLRD…HTNINHHEIW (263 aa). Mn(2+) contacts are provided by Asp-14, His-202, His-204, and Asn-238. Residues 392–523 form a regulatory domain region; that stretch reads RLDYFSVQSG…QNKENNKETV (132 aa).

It belongs to the alpha-IPM synthase/homocitrate synthase family. LeuA type 1 subfamily. In terms of assembly, homodimer. It depends on Mn(2+) as a cofactor.

Its subcellular location is the cytoplasm. It catalyses the reaction 3-methyl-2-oxobutanoate + acetyl-CoA + H2O = (2S)-2-isopropylmalate + CoA + H(+). Its pathway is amino-acid biosynthesis; L-leucine biosynthesis; L-leucine from 3-methyl-2-oxobutanoate: step 1/4. Functionally, catalyzes the condensation of the acetyl group of acetyl-CoA with 3-methyl-2-oxobutanoate (2-ketoisovalerate) to form 3-carboxy-3-hydroxy-4-methylpentanoate (2-isopropylmalate). The protein is 2-isopropylmalate synthase of Salmonella newport (strain SL254).